We begin with the raw amino-acid sequence, 766 residues long: 5-methyltetrahydropteroyltriglutamate--homocysteine methyltransferase (766 aa).

5-methyltetrahydropteroyltri-L-glutamate is bound by residues 16 to 19 (RELK) and lysine 119. Residues 440–442 (IGS) and glutamate 493 contribute to the L-homocysteine site. Residues 440–442 (IGS) and glutamate 493 contribute to the L-methionine site. 5-methyltetrahydropteroyltri-L-glutamate-binding positions include 524-525 (RC) and tryptophan 570. Aspartate 608 provides a ligand contact to L-homocysteine. Residue aspartate 608 participates in L-methionine binding. Glutamate 614 contributes to the 5-methyltetrahydropteroyltri-L-glutamate binding site. Positions 650, 652, and 674 each coordinate Zn(2+). Residue histidine 703 is the Proton donor of the active site. Cysteine 735 is a binding site for Zn(2+).

Belongs to the vitamin-B12 independent methionine synthase family. It depends on Zn(2+) as a cofactor.

The enzyme catalyses 5-methyltetrahydropteroyltri-L-glutamate + L-homocysteine = tetrahydropteroyltri-L-glutamate + L-methionine. It participates in amino-acid biosynthesis; L-methionine biosynthesis via de novo pathway; L-methionine from L-homocysteine (MetE route): step 1/1. Its function is as follows. Catalyzes the transfer of a methyl group from 5-methyltetrahydrofolate to homocysteine resulting in methionine formation. The polypeptide is 5-methyltetrahydropteroyltriglutamate--homocysteine methyltransferase (Pseudomonas aeruginosa (strain LESB58)).